The chain runs to 628 residues: Biosynthetic arginine decarboxylase (628 aa).

At K99 the chain carries N6-(pyridoxal phosphate)lysine. 279-289 is a binding site for substrate; it reads VDVGGGLGIDY.

This sequence belongs to the Orn/Lys/Arg decarboxylase class-II family. SpeA subfamily. The cofactor is Mg(2+). Pyridoxal 5'-phosphate serves as cofactor.

The enzyme catalyses L-arginine + H(+) = agmatine + CO2. Its function is as follows. Catalyzes the biosynthesis of agmatine from arginine. The polypeptide is Biosynthetic arginine decarboxylase (Xylella fastidiosa (strain 9a5c)).